The following is a 347-amino-acid chain: Isopentenyl-diphosphate delta-isomerase (347 aa).

Residues 1–31 (MDESNSQFEKRKRDHIRIALDPRSQTDGQNG) form a disordered region. A compositionally biased stretch (basic and acidic residues) spans 8–20 (FEKRKRDHIRIAL). 11 to 12 (RK) provides a ligand contact to substrate. FMN-binding positions include Ser-72, 73-75 (SMT), Ser-103, and Asn-132. Residue 103–105 (SQR) participates in substrate binding. Substrate is bound at residue Gln-166. Glu-167 is a Mg(2+) binding site. Residues Lys-198, Ser-223, Thr-228, 279-281 (GVR), and 300-301 (AK) contribute to the FMN site.

The protein belongs to the IPP isomerase type 2 family. As to quaternary structure, homooctamer. Dimer of tetramers. FMN is required as a cofactor. It depends on NADPH as a cofactor. Requires Mg(2+) as cofactor.

It localises to the cytoplasm. It catalyses the reaction isopentenyl diphosphate = dimethylallyl diphosphate. In terms of biological role, involved in the biosynthesis of isoprenoids. Catalyzes the 1,3-allylic rearrangement of the homoallylic substrate isopentenyl (IPP) to its allylic isomer, dimethylallyl diphosphate (DMAPP). This chain is Isopentenyl-diphosphate delta-isomerase, found in Bdellovibrio bacteriovorus (strain ATCC 15356 / DSM 50701 / NCIMB 9529 / HD100).